Consider the following 865-residue polypeptide: Alanine--tRNA ligase (865 aa).

Histidine 554, histidine 558, cysteine 656, and histidine 660 together coordinate Zn(2+).

This sequence belongs to the class-II aminoacyl-tRNA synthetase family. Requires Zn(2+) as cofactor.

Its subcellular location is the cytoplasm. It catalyses the reaction tRNA(Ala) + L-alanine + ATP = L-alanyl-tRNA(Ala) + AMP + diphosphate. Catalyzes the attachment of alanine to tRNA(Ala) in a two-step reaction: alanine is first activated by ATP to form Ala-AMP and then transferred to the acceptor end of tRNA(Ala). Also edits incorrectly charged Ser-tRNA(Ala) and Gly-tRNA(Ala) via its editing domain. This Francisella philomiragia subsp. philomiragia (strain ATCC 25017 / CCUG 19701 / FSC 153 / O#319-036) protein is Alanine--tRNA ligase.